Consider the following 546-residue polypeptide: CTP synthase (546 aa).

The tract at residues 1-266 (MTTRYIFVTG…DDLVVKRFGL (266 aa)) is amidoligase domain. Residue S14 participates in CTP binding. A UTP-binding site is contributed by S14. ATP-binding positions include 15–20 (SLGKGI) and D72. Mg(2+) contacts are provided by D72 and E140. Residues 147-149 (DIE), 187-192 (KTKPTQ), and K223 each bind CTP. UTP-binding positions include 187-192 (KTKPTQ) and K223. Residue 239-241 (KDV) participates in ATP binding. One can recognise a Glutamine amidotransferase type-1 domain in the interval 291 to 542 (VIGMVGKYIE…VAAASAHQKR (252 aa)). G352 is a binding site for L-glutamine. The active-site Nucleophile; for glutamine hydrolysis is the C379. Residues 380–383 (LGMQ), E403, and R470 each bind L-glutamine. Residues H515 and E517 contribute to the active site.

The protein belongs to the CTP synthase family. In terms of assembly, homotetramer.

The enzyme catalyses UTP + L-glutamine + ATP + H2O = CTP + L-glutamate + ADP + phosphate + 2 H(+). It catalyses the reaction L-glutamine + H2O = L-glutamate + NH4(+). The catalysed reaction is UTP + NH4(+) + ATP = CTP + ADP + phosphate + 2 H(+). The protein operates within pyrimidine metabolism; CTP biosynthesis via de novo pathway; CTP from UDP: step 2/2. Its activity is regulated as follows. Allosterically activated by GTP, when glutamine is the substrate; GTP has no effect on the reaction when ammonia is the substrate. The allosteric effector GTP functions by stabilizing the protein conformation that binds the tetrahedral intermediate(s) formed during glutamine hydrolysis. Inhibited by the product CTP, via allosteric rather than competitive inhibition. Its function is as follows. Catalyzes the ATP-dependent amination of UTP to CTP with either L-glutamine or ammonia as the source of nitrogen. Regulates intracellular CTP levels through interactions with the four ribonucleotide triphosphates. The polypeptide is CTP synthase (Shewanella sp. (strain ANA-3)).